The chain runs to 489 residues: UDP-N-acetylmuramoyl-L-alanyl-D-glutamate--2,6-diaminopimelate ligase (489 aa).

Ser30 is a binding site for UDP-N-acetyl-alpha-D-muramoyl-L-alanyl-D-glutamate. 110–116 (GTNGKTT) lines the ATP pocket. UDP-N-acetyl-alpha-D-muramoyl-L-alanyl-D-glutamate is bound by residues 152 to 153 (TT), Ser179, and Arg187. Lys219 is modified (N6-carboxylysine). Meso-2,6-diaminopimelate is bound by residues Arg381, 405-408 (DNPR), Gly458, and Glu462. The short motif at 405–408 (DNPR) is the Meso-diaminopimelate recognition motif element.

The protein belongs to the MurCDEF family. MurE subfamily. Requires Mg(2+) as cofactor. In terms of processing, carboxylation is probably crucial for Mg(2+) binding and, consequently, for the gamma-phosphate positioning of ATP.

It localises to the cytoplasm. The enzyme catalyses UDP-N-acetyl-alpha-D-muramoyl-L-alanyl-D-glutamate + meso-2,6-diaminopimelate + ATP = UDP-N-acetyl-alpha-D-muramoyl-L-alanyl-gamma-D-glutamyl-meso-2,6-diaminopimelate + ADP + phosphate + H(+). It functions in the pathway cell wall biogenesis; peptidoglycan biosynthesis. In terms of biological role, catalyzes the addition of meso-diaminopimelic acid to the nucleotide precursor UDP-N-acetylmuramoyl-L-alanyl-D-glutamate (UMAG) in the biosynthesis of bacterial cell-wall peptidoglycan. The chain is UDP-N-acetylmuramoyl-L-alanyl-D-glutamate--2,6-diaminopimelate ligase from Syntrophomonas wolfei subsp. wolfei (strain DSM 2245B / Goettingen).